A 37-amino-acid chain; its full sequence is Cytochrome b6-f complex subunit 5 (37 aa).

A helical membrane pass occupies residues 5 to 25; it reads LLSGIVLGMITVSALGLFVAA.

It belongs to the PetG family. As to quaternary structure, the 4 large subunits of the cytochrome b6-f complex are cytochrome b6, subunit IV (17 kDa polypeptide, PetD), cytochrome f and the Rieske protein, while the 4 small subunits are PetG, PetL, PetM and PetN. The complex functions as a dimer.

It is found in the plastid. It localises to the chloroplast thylakoid membrane. Its function is as follows. Component of the cytochrome b6-f complex, which mediates electron transfer between photosystem II (PSII) and photosystem I (PSI), cyclic electron flow around PSI, and state transitions. PetG is required for either the stability or assembly of the cytochrome b6-f complex. In Trieres chinensis (Marine centric diatom), this protein is Cytochrome b6-f complex subunit 5.